We begin with the raw amino-acid sequence, 377 residues long: Lipoyl synthase, mitochondrial (377 aa).

Residues Cys103, Cys108, Cys114, Cys134, Cys138, Cys141, and Ser349 each coordinate [4Fe-4S] cluster. In terms of domain architecture, Radical SAM core spans 119–338 (EHGTQTATIM…EERGNELGFL (220 aa)).

It belongs to the radical SAM superfamily. Lipoyl synthase family. [4Fe-4S] cluster serves as cofactor.

It localises to the mitochondrion. The catalysed reaction is [[Fe-S] cluster scaffold protein carrying a second [4Fe-4S](2+) cluster] + N(6)-octanoyl-L-lysyl-[protein] + 2 oxidized [2Fe-2S]-[ferredoxin] + 2 S-adenosyl-L-methionine + 4 H(+) = [[Fe-S] cluster scaffold protein] + N(6)-[(R)-dihydrolipoyl]-L-lysyl-[protein] + 4 Fe(3+) + 2 hydrogen sulfide + 2 5'-deoxyadenosine + 2 L-methionine + 2 reduced [2Fe-2S]-[ferredoxin]. It functions in the pathway protein modification; protein lipoylation via endogenous pathway; protein N(6)-(lipoyl)lysine from octanoyl-[acyl-carrier-protein]: step 2/2. Functionally, catalyzes the radical-mediated insertion of two sulfur atoms into the C-6 and C-8 positions of the octanoyl moiety bound to the lipoyl domains of lipoate-dependent enzymes, thereby converting the octanoylated domains into lipoylated derivatives. This Drosophila sechellia (Fruit fly) protein is Lipoyl synthase, mitochondrial.